Reading from the N-terminus, the 66-residue chain is uncharacterized protein (66 aa).

The HTH cro/C1-type domain maps to 5 to 59 (LKYYRALHNLTQEDLAKKLGVSRQTIIAIEKGKYDPSLKLAFKIAKFFGVKIEDI). The H-T-H motif DNA-binding region spans 16-35 (QEDLAKKLGVSRQTIIAIEK).

This is an uncharacterized protein from Methanocaldococcus jannaschii (strain ATCC 43067 / DSM 2661 / JAL-1 / JCM 10045 / NBRC 100440) (Methanococcus jannaschii).